The chain runs to 2967 residues: BEACH domain-containing protein lvsD (2967 aa).

Disordered regions lie at residues 1-25 (MSSP…RIGG), 322-364 (NNNN…SSNS), 588-615 (ILSI…QQQL), 917-936 (NNSN…NNIN), 1077-1105 (GGSN…KDKD), 1173-1220 (NTSS…SDHR), 1583-1613 (NNNS…NNEN), 1831-1859 (QQQQ…SSVV), 1921-2009 (PQKT…TLNN), and 2029-2062 (KSTL…NNKN). The 263-residue stretch at 229–491 (MTFRKAPSSV…QDLFRKGSNY (263 aa)) folds into the BEACH 1 domain. Positions 1079 to 1092 (SNNNNNNNNNNSNN) are enriched in low complexity. Residues 1093–1105 (NKDKIDSNNKDKD) are compositionally biased toward basic and acidic residues. 6 stretches are compositionally biased toward low complexity: residues 1185-1194 (PLLTSTKSMS), 1583-1611 (NNNS…LNNN), 1831-1857 (QQQQ…SSSS), 1926-1980 (QNQH…SFSN), 1993-2006 (NIIT…TTST), and 2034-2062 (SSSS…NNKN). The 103-residue stretch at 2060 to 2162 (NKNIKLEFST…ICAQILKLIG (103 aa)) folds into the BEACH-type PH domain. BEACH domains follow at residues 2202–2492 (TPQQ…HPQR) and 2628–2785 (NSRV…IYSN). 2 WD repeats span residues 2658-2710 (NHKS…SDHH) and 2720-2761 (GHNF…KSIQ). Disordered stretches follow at residues 2798–2820 (SATT…SSNT) and 2915–2934 (PSTS…NNGN). Low complexity-rich tracts occupy residues 2811–2820 (SSSSLSSSNT) and 2924–2934 (NSNNNNNNNGN).

The protein is BEACH domain-containing protein lvsD (lvsD) of Dictyostelium discoideum (Social amoeba).